Reading from the N-terminus, the 680-residue chain is SH3 domain-binding protein 1 (680 aa).

Basic residues predominate over residues 1-11 (MMKRQLHRMRQ). 2 disordered regions span residues 1-24 (MMKR…TPET) and 160-184 (SQAA…HTTT). The interaction with CGNL1 stretch occupies residues 1-275 (MMKRQLHRMR…TAAPFSRVYG (275 aa)). Residues 81–262 (MAESFKELDP…RDNHSQADHS (182 aa)) enclose the BAR domain. A compositionally biased stretch (polar residues) spans 160-169 (SQAAKNSGSN). Phosphoserine occurs at positions 241 and 262. The region spanning 276 to 469 (VSLRTHLQDL…ALIQNADTLF (194 aa)) is the Rho-GAP domain. Residues 470–680 (PGDINFNVSG…RPRGLISETE (211 aa)) are interaction with CD2AP. Residues 488 to 680 (EKVSSQQVSE…RPRGLISETE (193 aa)) form a disordered region. The segment covering 502–516 (VTVPAPATTPAPTPA) has biased composition (pro residues). Serine 535 is subject to Phosphoserine. Residues 536–546 (PKVSRNPTETA) show a composition bias toward polar residues. Positions 561–571 (PARPTMPPPQP) are enriched in pro residues. At serine 582 the chain carries Phosphoserine. Threonine 592 bears the Phosphothreonine mark. The SH3-binding signature appears at 607 to 616 (APTMPPPLPP). Pro residues predominate over residues 609–621 (TMPPPLPPVPPQP). Serine 632 carries the phosphoserine modification. Pro residues predominate over residues 660-671 (HPPPPALPPQPR).

Interacts with RAC1. Interacts with the exocyst via EXOC4 and EXOC8; required for the localization of both SH3BP1 and the exocyst to the leading edge of migrating cells. Interacts with CD2AP and CGNL1; probably part of a complex at cell junctions. Interacts with CAPZA1; recruits CAPZA1 to forming cell junctions. May interact with AFDN. Interacts with PLXND1; they dissociate upon SEMA3E binding to PLXND1 allowing SH3BP1 to transduce downstream signal through RAC1 inactivation. Interacts with ABL1, GRB2 and SRC (via SH3 domain). In terms of tissue distribution, expressed in all tissues examined. Highest levels found in spleen and brain, lowest in heart and liver.

It is found in the cell projection. The protein resides in the cell junction. The protein localises to the tight junction. It localises to the adherens junction. Its subcellular location is the phagocytic cup. It is found in the nucleus. The protein resides in the cytoplasm. The protein localises to the cytosol. GTPase activating protein (GAP) which specifically converts GTP-bound Rho-type GTPases including RAC1 and CDC42 in their inactive GDP-bound form. By specifically inactivating RAC1 at the leading edge of migrating cells, it regulates the spatiotemporal organization of cell protrusions which is important for proper cell migration. Also negatively regulates CDC42 in the process of actin remodeling and the formation of epithelial cell junctions. Through its GAP activity toward RAC1 and/or CDC42 plays a specific role in phagocytosis of large particles. Specifically recruited by a PI3 kinase/PI3K-dependent mechanism to sites of large particles engagement, inactivates RAC1 and/or CDC42 allowing the reorganization of the underlying actin cytoskeleton required for engulfment. It also plays a role in angiogenesis and the process of repulsive guidance as part of a semaphorin-plexin signaling pathway. Following the binding of PLXND1 to extracellular SEMA3E it dissociates from PLXND1 and inactivates RAC1, inducing the intracellular reorganization of the actin cytoskeleton and the collapse of cells. This Mus musculus (Mouse) protein is SH3 domain-binding protein 1.